The primary structure comprises 140 residues: uncharacterized protein (140 aa).

In terms of domain architecture, HTH cro/C1-type spans I26 to L80. A DNA-binding region (H-T-H motif) is located at residues M37 to R56.

This is an uncharacterized protein from Mycobacterium tuberculosis (strain ATCC 25618 / H37Rv).